Consider the following 2617-residue polypeptide: Non-reducing polyketide synthase epaA (2617 aa).

Residues 95–231 form an N-terminal acylcarrier protein transacylase domain (SAT) region; it reads PNILLSPMVV…AARSISSLQQ (137 aa). Residue Cys-132 is the Nucleophile; for transacylase activity of the active site. His-250 functions as the Proton donor/acceptor; for transacylase activity in the catalytic mechanism. Positions 372-790 constitute a Ketosynthase family 3 (KS3) domain; it reads PNEIAVIGMS…GSNASMVVAQ (419 aa). Catalysis depends on for beta-ketoacyl synthase activity residues Cys-539, His-674, and His-713. The segment at 902–1193 is malonyl-CoA:ACP transacylase (MAT) domain; the sequence is FGGQISNYVG…ITSMASRALG (292 aa). The N-terminal hotdog fold stretch occupies residues 1282–1413; that stretch reads PKTLWSLIEA…GKLAFLSGQD (132 aa). One can recognise a PKS/mFAS DH domain in the interval 1282 to 1591; the sequence is PKTLWSLIEA…YHKVAKASMS (310 aa). The product template (PT) domain stretch occupies residues 1310-1589; the sequence is LVSGHVIANT…INYHKVAKAS (280 aa). His-1314 serves as the catalytic Proton acceptor; for dehydratase activity. Positions 1443-1591 are C-terminal hotdog fold; the sequence is ADDIIQGRNI…YHKVAKASMS (149 aa). Asp-1499 acts as the Proton donor; for dehydratase activity in catalysis. The disordered stretch occupies residues 1600–1651; the sequence is TEAAPSSSTRAHPTSSSSPRLPGPSVPEDKSQNETQPAGTNAVAKKKSEKSA. The span at 1602-1619 shows a compositional bias: low complexity; sequence AAPSSSTRAHPTSSSSPR. In terms of domain architecture, Carrier spans 1653–1727; that stretch reads QNVLEKTRAL…GLVEYVQSAV (75 aa). Ser-1687 carries the O-(pantetheine 4'-phosphoryl)serine modification. Residues 1728–1799 form a disordered region; that stretch reads GVPTNGDEPD…PAMPPASSKT (72 aa). The span at 1750-1766 shows a compositional bias: low complexity; it reads LAPSPSSSSSSTNLTED. The span at 1769-1785 shows a compositional bias: polar residues; that stretch reads LDQAETTTNISSYPGQT. A methyltransferase domain region spans residues 1970–2158; it reads DSLLNKLSYR…VGYGQVDWTD (189 aa). The interval 2240-2485 is NADPH-binding (R) domain; sequence ITGATGSLGV…LCWTPVNDVA (246 aa).

Requires pantetheine 4'-phosphate as cofactor.

Its pathway is secondary metabolite biosynthesis. Its function is as follows. Non-reducing polyketide synthase; part of the gene cluster that mediates the biosynthesis of nigerpyrone and its derivatives carbonarone A and pestalamide A. The biosynthesis pathway begins with the polyketide assembly by epaA to form phenylacetyl triketide precursor from successive condensation of two malonyl-CoA, presumably with one phenylacetyl-CoA starter unit produced by the phenylacetyl-CoA ligase epaB. For the nigerpyrone biosynthesis, the reactive polyketide chain is released as an aldehyde through the R-domain. A nonenzymatic cyclization and dehydration may create nigerpyrone. For the biosynthesis of carbonarone A and pestalamide A, an extra methyl group is added through the C-methyltransferase domain. Several further steps involving the dehydrogenase orf1, the cytochrome P450 monooxygenase orf2 and the FAD-dependent monooxygenase orf3 are required to form a carbonarone A precursor which is converted to carbonarone A via cyclization. The O-acetyltransferase epaC could catalyze the transfer of 2-methylsuccinyl-CoA, a common intermediate in the ethylmalonyl-CoA pathway, to generate the final product pestalamide A. The polypeptide is Non-reducing polyketide synthase epaA (Aspergillus niger (strain ATCC MYA-4892 / CBS 513.88 / FGSC A1513)).